Reading from the N-terminus, the 252-residue chain is Imidazole glycerol phosphate synthase subunit HisF (252 aa).

Active-site residues include Asp13 and Asp132.

This sequence belongs to the HisA/HisF family. In terms of assembly, heterodimer of HisH and HisF.

It is found in the cytoplasm. The enzyme catalyses 5-[(5-phospho-1-deoxy-D-ribulos-1-ylimino)methylamino]-1-(5-phospho-beta-D-ribosyl)imidazole-4-carboxamide + L-glutamine = D-erythro-1-(imidazol-4-yl)glycerol 3-phosphate + 5-amino-1-(5-phospho-beta-D-ribosyl)imidazole-4-carboxamide + L-glutamate + H(+). It functions in the pathway amino-acid biosynthesis; L-histidine biosynthesis; L-histidine from 5-phospho-alpha-D-ribose 1-diphosphate: step 5/9. In terms of biological role, IGPS catalyzes the conversion of PRFAR and glutamine to IGP, AICAR and glutamate. The HisF subunit catalyzes the cyclization activity that produces IGP and AICAR from PRFAR using the ammonia provided by the HisH subunit. In Campylobacter fetus subsp. fetus (strain 82-40), this protein is Imidazole glycerol phosphate synthase subunit HisF.